The chain runs to 134 residues: uncharacterized protein (134 aa).

A helical transmembrane segment spans residues 4–24 (NLLILLSLLLVVVAIMWWLYE).

Its subcellular location is the membrane. This is an uncharacterized protein from Invertebrate iridescent virus 6 (IIV-6).